A 307-amino-acid polypeptide reads, in one-letter code: Cyclin-dependent kinase 5 activator 1 (307 aa).

Ser8 carries the post-translational modification Phosphoserine; by CDK5. Residues Ser96–Ala136 are disordered. Pro residues predominate over residues Gln100–Pro110. Residues Asn112 to Val125 are compositionally biased toward polar residues. Residue Thr138 is modified to Phosphothreonine; by CDK5.

Belongs to the cyclin-dependent kinase 5 activator family. As to quaternary structure, heterodimer composed of a catalytic subunit CDK5 and a regulatory subunit CDK5R1 (p25) and macromolecular complex composed of at least CDK5, CDK5R1 (p35) and CDK5RAP1 or CDK5RAP2 or CDK5RAP3. Only the heterodimer shows kinase activity. Interacts with EPHA4 and NGEF; may mediate the activation of NGEF by EPHA4. Interacts with RASGRF2. The complex p35/CDK5 interacts with CLOCK. In terms of processing, the p35 form is proteolytically cleaved by calpain, giving rise to the p25 form. P35 has a 5 to 10 fold shorter half-life compared to p25. The conversion results in deregulation of the CDK5 kinase: p25/CDK5 kinase displays an increased and altered tau phosphorylation in comparison to the p35/CDK5 kinase in vivo. Post-translationally, myristoylated. A proper myristoylation signal is essential for the proper distribution of p35. Phosphorylation at Ser-8 and Thr-138 by CDK5 prevents calpain-mediated proteolysis. In terms of processing, ubiquitinated, leading to its degradation: degradation of p35 by proteasome results in down-regulation of CDK5 activity. During this process, CDK5 phosphorylates p35 and induces its ubiquitination and subsequent degradation. Ubiquitinated by the CRL2(FEM1B) complex, which recognizes the -Gly-Leu-Asp-Arg C-degron at the C-terminus, leading to its degradation. In terms of tissue distribution, brain and neuron specific.

It is found in the cell membrane. It localises to the cell projection. The protein localises to the neuron projection. The protein resides in the nucleus. Its subcellular location is the cytoplasm. It is found in the perinuclear region. It localises to the perikaryon. P35 is a neuron specific activator of CDK5. The complex p35/CDK5 is required for neurite outgrowth and cortical lamination. Involved in dendritic spine morphogenesis by mediating the EFNA1-EPHA4 signaling. Activator of TPKII. The complex p35/CDK5 participates in the regulation of the circadian clock by modulating the function of CLOCK protein: phosphorylates CLOCK at 'Thr-451' and 'Thr-461' and regulates the transcriptional activity of the CLOCK-BMAL1 heterodimer in association with altered stability and subcellular distribution. In Spermophilus citellus (European ground squirrel), this protein is Cyclin-dependent kinase 5 activator 1 (CDK5R1).